The chain runs to 544 residues: Chaperonin GroEL 2 (544 aa).

Residues 30-33, 87-91, Gly415, 480-482, and Asp496 contribute to the ATP site; these read TLGP, DGTTT, and NAA.

It belongs to the chaperonin (HSP60) family. In terms of assembly, forms a cylinder of 14 subunits composed of two heptameric rings stacked back-to-back. Interacts with the co-chaperonin GroES.

The protein localises to the cytoplasm. It carries out the reaction ATP + H2O + a folded polypeptide = ADP + phosphate + an unfolded polypeptide.. In terms of biological role, together with its co-chaperonin GroES, plays an essential role in assisting protein folding. The GroEL-GroES system forms a nano-cage that allows encapsulation of the non-native substrate proteins and provides a physical environment optimized to promote and accelerate protein folding. This is Chaperonin GroEL 2 from Albidiferax ferrireducens (strain ATCC BAA-621 / DSM 15236 / T118) (Rhodoferax ferrireducens).